Reading from the N-terminus, the 119-residue chain is Basic phospholipase A2 notexin (119 aa).

7 disulfide bridges follow: Cys-11/Cys-71, Cys-27/Cys-118, Cys-29/Cys-45, Cys-44/Cys-99, Cys-51/Cys-92, Cys-60/Cys-85, and Cys-78/Cys-90. Ca(2+)-binding residues include Tyr-28, Gly-30, and Gly-32. His-48 is a catalytic residue. Residue Asp-49 coordinates Ca(2+). Asp-93 is an active-site residue.

It belongs to the phospholipase A2 family. Group I subfamily. D49 sub-subfamily. As to quaternary structure, monomer. Requires Ca(2+) as cofactor. As to expression, expressed by the venom gland.

Its subcellular location is the secreted. The catalysed reaction is a 1,2-diacyl-sn-glycero-3-phosphocholine + H2O = a 1-acyl-sn-glycero-3-phosphocholine + a fatty acid + H(+). Snake venom phospholipase A2 (PLA2) that inhibits neuromuscular transmission by blocking acetylcholine release from the nerve termini. Is directly toxic to skeletal muscle upon local application in vivo (dystrophic effect). Also has direct nephrotoxicity in experimental mice; a single subcutaneous dose (1.38 ug/kg) produces renal tubular and glomerular damage within 24 hours. PLA2 catalyzes the calcium-dependent hydrolysis of the 2-acyl groups in 3-sn-phosphoglycerides. The chain is Basic phospholipase A2 notexin from Notechis scutatus scutatus (Mainland tiger snake).